A 376-amino-acid polypeptide reads, in one-letter code: Lipoyl synthase 2, mitochondrial (376 aa).

[4Fe-4S] cluster is bound by residues C109, C114, C120, C140, C144, C147, and S356. One can recognise a Radical SAM core domain in the interval 125–345 (ETGTATATIM…QTLGMEMGFR (221 aa)).

Belongs to the radical SAM superfamily. Lipoyl synthase family. Requires [4Fe-4S] cluster as cofactor.

Its subcellular location is the mitochondrion. The catalysed reaction is [[Fe-S] cluster scaffold protein carrying a second [4Fe-4S](2+) cluster] + N(6)-octanoyl-L-lysyl-[protein] + 2 oxidized [2Fe-2S]-[ferredoxin] + 2 S-adenosyl-L-methionine + 4 H(+) = [[Fe-S] cluster scaffold protein] + N(6)-[(R)-dihydrolipoyl]-L-lysyl-[protein] + 4 Fe(3+) + 2 hydrogen sulfide + 2 5'-deoxyadenosine + 2 L-methionine + 2 reduced [2Fe-2S]-[ferredoxin]. It participates in protein modification; protein lipoylation via endogenous pathway; protein N(6)-(lipoyl)lysine from octanoyl-[acyl-carrier-protein]: step 2/2. In terms of biological role, catalyzes the radical-mediated insertion of two sulfur atoms into the C-6 and C-8 positions of the octanoyl moiety bound to the lipoyl domains of lipoate-dependent enzymes, thereby converting the octanoylated domains into lipoylated derivatives. The chain is Lipoyl synthase 2, mitochondrial from Pisum sativum (Garden pea).